The following is a 286-amino-acid chain: Pantothenate synthetase (286 aa).

An ATP-binding site is contributed by 32-39 (MGALHEGH). Residue His-39 is the Proton donor of the active site. (R)-pantoate is bound at residue Gln-63. Beta-alanine is bound at residue Gln-63. An ATP-binding site is contributed by 149–152 (GEKD). Gln-155 serves as a coordination point for (R)-pantoate. Residues Leu-178 and 186-189 (SSSR) contribute to the ATP site.

It belongs to the pantothenate synthetase family. In terms of assembly, homodimer.

Its subcellular location is the cytoplasm. The catalysed reaction is (R)-pantoate + beta-alanine + ATP = (R)-pantothenate + AMP + diphosphate + H(+). Its pathway is cofactor biosynthesis; (R)-pantothenate biosynthesis; (R)-pantothenate from (R)-pantoate and beta-alanine: step 1/1. In terms of biological role, catalyzes the condensation of pantoate with beta-alanine in an ATP-dependent reaction via a pantoyl-adenylate intermediate. The chain is Pantothenate synthetase from Bartonella quintana (strain Toulouse) (Rochalimaea quintana).